We begin with the raw amino-acid sequence, 229 residues long: Cilia- and flagella-associated protein 95 (229 aa).

Residues 1–123 are Extracellular-facing; that stretch reads MDSLDRSCQD…LLNEETVSSG (123 aa). A glycan (N-linked (GlcNAc...) asparagine) is linked at Asn75. Residues 124–140 traverse the membrane as a helical segment; that stretch reads IIERVTGLPATGFGAVF. Residues 141-229 lie on the Cytoplasmic side of the membrane; it reads PRHPPDWSKM…PLTSGPIVPI (89 aa). Residues 153 to 163 are mn; that stretch reads LTTYSEDYVPP.

In terms of assembly, microtubule inner protein component of sperm flagellar doublet microtubules. Interacts with MYH9. Interacts with MYH10. As to expression, expressed in undifferentiated embryonic stem cells. Expressed in airway epithelial cells.

The protein localises to the cytoplasm. The protein resides in the cytoskeleton. It localises to the cilium axoneme. It is found in the flagellum axoneme. Its subcellular location is the cell membrane. Its function is as follows. Microtubule inner protein (MIP) part of the dynein-decorated doublet microtubules (DMTs) in cilia axoneme, which is required for motile cilia beating. The polypeptide is Cilia- and flagella-associated protein 95 (Homo sapiens (Human)).